The sequence spans 88 residues: Small ribosomal subunit protein uS17 (88 aa).

It belongs to the universal ribosomal protein uS17 family. As to quaternary structure, part of the 30S ribosomal subunit.

Its function is as follows. One of the primary rRNA binding proteins, it binds specifically to the 5'-end of 16S ribosomal RNA. This is Small ribosomal subunit protein uS17 from Yersinia pseudotuberculosis serotype O:1b (strain IP 31758).